The primary structure comprises 311 residues: Pyrimidine-specific ribonucleoside hydrolase RihA (311 aa).

Residue His240 is part of the active site.

This sequence belongs to the IUNH family. RihA subfamily.

Hydrolyzes with equal efficiency cytidine or uridine to ribose and cytosine or uracil, respectively. The polypeptide is Pyrimidine-specific ribonucleoside hydrolase RihA (Escherichia coli O7:K1 (strain IAI39 / ExPEC)).